The sequence spans 276 residues: Malectin-A (276 aa).

The N-terminal stretch at 1 to 26 (MLSIRTVLGPLATILLTVLGPFGAHG) is a signal peptide. Over 27 to 253 (SGLADKVIWA…TPNPYASDNS (227 aa)) the chain is Lumenal. 5 residues coordinate a carbohydrate: Tyr67, Tyr89, Tyr116, Phe117, and Asp186. Residues 204–247 (PMLQPHPGLEKKEEEEEEEEEEGSTSKKQINKNRVQSGPRTPNP) form a disordered region. Positions 216–226 (EEEEEEEEEEG) are enriched in acidic residues. Positions 229 to 247 (SKKQINKNRVQSGPRTPNP) are enriched in polar residues. Asn252 carries an N-linked (GlcNAc...) asparagine glycan. Residues 254–274 (SLMFPILVAFGVFIPTLFCLC) traverse the membrane as a helical segment. The Cytoplasmic segment spans residues 275 to 276 (RL).

The protein belongs to the malectin family. In terms of tissue distribution, widely expressed throughout development including the anterior neuroectoderm and neural crest at stages 18 and 20, and the retina, hatching gland, otic vesicle, epibranchial placodes, pronephros and tail tip of later states. At stage 41, expressed in the liver, pancreas, branchial arches and proctodeum. Expressed broadly in adults in fat, intestine, gall bladder, eye, muscle, kidney, stomach, liver, heart, pancreas and lung.

The protein localises to the endoplasmic reticulum membrane. Carbohydrate-binding protein with a strong ligand preference for Glc2-N-glycan. May play a role in the early steps of protein N-glycosylation. Can bind di- or higher oligomers but not monomers of glucose, including maltose, maltotriose, maltotetraose, maltoheptaose, nigerose, kojibose, cellobiose and isomaltose, although based on their subcellular locations, these are unlikely to all be physiological ligands. This is Malectin-A from Xenopus laevis (African clawed frog).